Here is a 380-residue protein sequence, read N- to C-terminus: tRNA-specific 2-thiouridylase MnmA (380 aa).

Residues 26 to 33 and Leu-52 each bind ATP; that span reads AMSGGVDS. The active-site Nucleophile is Cys-120. An intrachain disulfide couples Cys-120 to Cys-217. Gly-144 is an ATP binding site. The tract at residues 166–168 is interaction with tRNA; that stretch reads RDQ. Cys-217 (cysteine persulfide intermediate) is an active-site residue.

It belongs to the MnmA/TRMU family.

It localises to the cytoplasm. It carries out the reaction S-sulfanyl-L-cysteinyl-[protein] + uridine(34) in tRNA + AH2 + ATP = 2-thiouridine(34) in tRNA + L-cysteinyl-[protein] + A + AMP + diphosphate + H(+). Its function is as follows. Catalyzes the 2-thiolation of uridine at the wobble position (U34) of tRNA, leading to the formation of s(2)U34. The protein is tRNA-specific 2-thiouridylase MnmA of Roseobacter denitrificans (strain ATCC 33942 / OCh 114) (Erythrobacter sp. (strain OCh 114)).